The sequence spans 1210 residues: V-type proton ATPase 116 kDa subunit a 4 (1210 aa).

At 1 to 715 (MSSFSNVGFV…YTIITFPFLF (715 aa)) the chain is on the cytoplasmic side. The segment covering 259–271 (SSKISFTSSSPSP) has biased composition (low complexity). Residues 259–292 (SSKISFTSSSPSPQRNPKNEAQKNSSSKREETSM) form a disordered region. The span at 275–291 (PKNEAQKNSSSKREETS) shows a compositional bias: basic and acidic residues. Residues 339-405 (FVKQMRRCEE…EREFLDLNNN (67 aa)) adopt a coiled-coil conformation. A helical transmembrane segment spans residues 716–736 (AVMFGDAAHGAILLLAALFFI). Over 737-760 (RNERKIESKKIRDEIFNTFYGGRY) the chain is Extracellular. The chain crosses the membrane as a helical span at residues 761–781 (IMMLMGIFSIYTGFLYNDAFA). The Cytoplasmic portion of the chain corresponds to 782 to 855 (KSFNVFGSGW…SFLNSMKMKA (74 aa)). A helical transmembrane segment spans residues 856 to 876 (SVIIGITQMTFGVFLSVLNHI). Residues 877-892 (HFKSYIDIISNFIPQV) lie on the Extracellular side of the membrane. The chain crosses the membrane as a helical span at residues 893 to 913 (IFLSCIFIYLCIQIIVKWIFF). Residues 914 to 976 (SVNAENVFGF…WYPNQRLVET (63 aa)) lie on the Cytoplasmic side of the membrane. The helical transmembrane segment at 977–997 (ILISISLACIPIMLFGKPLWV) threads the bilayer. Residues 998–1127 (RFVTSKRHKL…NETIAMCLKP (130 aa)) lie on the Extracellular side of the membrane. N-linked (GlcNAc...) asparagine glycosylation is found at asparagine 1010, asparagine 1019, and asparagine 1118. The chain crosses the membrane as a helical span at residues 1128–1148 (VVACVAFFIFASLSLSILIMM). Over 1149-1210 (EGLSAFLHAL…DISSGQHLHI (62 aa)) the chain is Cytoplasmic.

The protein belongs to the V-ATPase 116 kDa subunit family. As to quaternary structure, V-ATPase is a heteromultimeric enzyme made up of two complexes: the ATP-hydrolytic V1 complex and the proton translocation V0 complex. The V1 complex consists of three catalytic AB heterodimers that form a heterohexamer, three peripheral stalks each consisting of EG heterodimers, one central rotor including subunits D and F, and the regulatory subunits C and H. The proton translocation complex V0 consists of the proton transport subunit a, a ring of proteolipid subunits c9c'', rotary subunit d, subunits e and f, and the accessory subunits vah-19/Ac45 and vah-20/PRR. Expressed in uterus.

The protein localises to the membrane. Its function is as follows. Subunit of the V0 complex of vacuolar(H+)-ATPase (V-ATPase), a multisubunit enzyme composed of a peripheral complex (V1) that hydrolyzes ATP and a membrane integral complex (V0) that translocates protons. V-ATPase is responsible for acidifying and maintaining the pH of intracellular compartments and in some cell types, is targeted to the plasma membrane, where it is responsible for acidifying the extracellular environment. The protein is V-type proton ATPase 116 kDa subunit a 4 of Caenorhabditis elegans.